Consider the following 421-residue polypeptide: Nucleoprotein (421 aa).

Composition is skewed to polar residues over residues 1–11 (MSDNGPQNQRS) and 21–30 (TDSTDNNQDG). The tract at residues 1–49 (MSDNGPQNQRSAPRITFGGPTDSTDNNQDGGRSGARPKQRRPQGLPNNT) is disordered. An RNA-binding region spans residues 41-186 (RPQGLPNNTA…RGGSQASSRS (146 aa)). Residues 48–175 (NTASWFTALT…TLPKGFYAEG (128 aa)) form the CoV N NTD domain. RNA-binding residues include R92, R107, and R149. 3 disordered regions span residues 168-213 (PKGF…MASG), 233-268 (KVSG…TKQY), and 363-421 (FPPT…STQA). At S176 the chain carries Phosphoserine; by host. Over residues 179-206 (GSQASSRSSSRSRGNSRNSTPGSSRGNS) the composition is skewed to low complexity. A compositionally biased stretch (polar residues) spans 233–248 (KVSGRSQQQQGQTVTK). In terms of domain architecture, CoV N CTD spans 247–364 (TKKSAAEASK…KHIDAYKIFP (118 aa)). Positions 258–361 (PRQKRTATKQ…LLNKHIDAYK (104 aa)) are dimerization. Over residues 367 to 378 (EPKKDKKKKTDE) the composition is skewed to basic and acidic residues. Residues 405 to 421 (RQLQNSMSGASADSTQA) are compositionally biased toward polar residues.

The protein belongs to the betacoronavirus nucleocapsid protein family. In terms of assembly, homooligomer. Both monomeric and oligomeric forms interact with RNA. Interacts with protein M. Interacts with NSP3; this interaction serves to tether the genome to the newly translated replicase-transcriptase complex at a very early stage of infection. ADP-ribosylated. The ADP-ribosylation is retained in the virion during infection. In terms of processing, phosphorylated on serine and threonine residues.

The protein resides in the virion. The protein localises to the host endoplasmic reticulum-Golgi intermediate compartment. It localises to the host Golgi apparatus. Packages the positive strand viral genome RNA into a helical ribonucleocapsid (RNP) and plays a fundamental role during virion assembly through its interactions with the viral genome and membrane protein M. Plays an important role in enhancing the efficiency of subgenomic viral RNA transcription as well as viral replication. The protein is Nucleoprotein of Bat coronavirus Rp3/2004 (BtCoV/Rp3/2004).